The following is a 318-amino-acid chain: Pyrimidine-specific ribonucleoside hydrolase RihA (318 aa).

His-240 is a catalytic residue.

It belongs to the IUNH family. RihA subfamily.

Its function is as follows. Hydrolyzes cytidine or uridine to ribose and cytosine or uracil, respectively. The sequence is that of Pyrimidine-specific ribonucleoside hydrolase RihA from Shewanella sp. (strain ANA-3).